The primary structure comprises 219 residues: MKRLVLISLVLAAGCSTVPPTNVHQPMTARPSPRFEMANGNGSIYQAASSRPLFEDRRARFVGDTITVKITESTTASTKSNNKVDQSNAQKYGLGASTGMFGRVLPGAMDMSASSSTAFSGKGEAANNNIFTGNMTVTVIDVMPNGNLLVSGEKQVAIGSEQEFVRISGVVNPSFVDAFNVVDSSKIADARIEYKSSGQVSDGQVMGWLARFFLNVMPF.

Positions 1-14 (MKRLVLISLVLAAG) are cleaved as a signal peptide. Cys-15 is lipidated: N-palmitoyl cysteine. Cys-15 is lipidated: S-diacylglycerol cysteine.

This sequence belongs to the FlgH family. The basal body constitutes a major portion of the flagellar organelle and consists of four rings (L,P,S, and M) mounted on a central rod.

Its subcellular location is the cell outer membrane. It localises to the bacterial flagellum basal body. In terms of biological role, assembles around the rod to form the L-ring and probably protects the motor/basal body from shearing forces during rotation. The sequence is that of Flagellar L-ring protein from Dechloromonas aromatica (strain RCB).